We begin with the raw amino-acid sequence, 61 residues long: MGMRMMFIIFLFVVLATTVVSFTSGRASDGRNAPANNKVSDLIRQFCCGHYDCDFIPNVCG.

A signal peptide spans 1–21 (MGMRMMFIIFLFVVLATTVVS). The propeptide occupies 22–44 (FTSGRASDGRNAPANNKVSDLIR). Gln45 carries the pyrrolidone carboxylic acid modification. 2 disulfides stabilise this stretch: Cys47–Cys53 and Cys48–Cys60. A Cysteine amide modification is found at Cys60.

The protein belongs to the conotoxin A superfamily. Expressed by the venom duct.

Its subcellular location is the secreted. In terms of biological role, alpha-conotoxins act on postsynaptic membranes, they bind to the nicotinic acetylcholine receptors (nAChR) and thus inhibit them. This chain is Alpha-conotoxin-like Lp1.6a, found in Conus leopardus (Leopard cone).